Reading from the N-terminus, the 249-residue chain is MVERLDGVFKSISDFLRQELNGKNAVIGVSSGIDSALVLTILSKAIDKDRIHAFFMPDRFTRSADFDDIRSLEGSTGVKINEINIENIVNGYKSTLGINDKKYEGNIRSRVRSVILYYNANLLNGLVVGTTNRTEYLIGYFTKYGDGACDLEPIEHLYKSDVRELASYLKVPESIIRKKPSAGLWGDQYDEDELGMGYEELDSILKDLFEKKTGILDDRYKMVYDMYIRSQHKRKLPKSMMNDDFRYNV.

Asp34 contributes to the Mg(2+) binding site. Position 110 (Arg110) interacts with deamido-NAD(+). Thr130 provides a ligand contact to ATP. Residue Glu135 participates in Mg(2+) binding. Deamido-NAD(+) contacts are provided by Lys143 and Asp150. The ATP site is built by Lys159 and Ser181. Residue 232–233 coordinates deamido-NAD(+); sequence HK.

It belongs to the NAD synthetase family. In terms of assembly, homodimer.

The enzyme catalyses deamido-NAD(+) + NH4(+) + ATP = AMP + diphosphate + NAD(+) + H(+). The protein operates within cofactor biosynthesis; NAD(+) biosynthesis; NAD(+) from deamido-NAD(+) (ammonia route): step 1/1. In terms of biological role, catalyzes the ATP-dependent amidation of deamido-NAD to form NAD. Uses ammonia as a nitrogen source. This is NH(3)-dependent NAD(+) synthetase from Picrophilus torridus (strain ATCC 700027 / DSM 9790 / JCM 10055 / NBRC 100828 / KAW 2/3).